Consider the following 69-residue polypeptide: Conotoxin reg3f (69 aa).

The signal sequence occupies residues 1-20; sequence MMSKLGVLLTICLLLFPLSA. Residues 21–52 constitute a propeptide that is removed on maturation; sequence LPLDGDQPADQPAERMQDISPEQNPLFHPDKR. Intrachain disulfides connect Cys54-Cys68, Cys55-Cys66, and Cys60-Cys69. Cys69 carries the post-translational modification Cysteine amide.

In terms of tissue distribution, expressed by the venom duct.

It localises to the secreted. This is Conotoxin reg3f from Conus regius (Crown cone).